Consider the following 270-residue polypeptide: UPF0354 protein BPUM_2629 (270 aa).

It belongs to the UPF0354 family.

The sequence is that of UPF0354 protein BPUM_2629 from Bacillus pumilus (strain SAFR-032).